The sequence spans 354 residues: Peptide chain release factor 1 (354 aa).

Q233 is subject to N5-methylglutamine.

The protein belongs to the prokaryotic/mitochondrial release factor family. Methylated by PrmC. Methylation increases the termination efficiency of RF1.

It is found in the cytoplasm. In terms of biological role, peptide chain release factor 1 directs the termination of translation in response to the peptide chain termination codons UAG and UAA. This is Peptide chain release factor 1 from Clostridioides difficile (strain 630) (Peptoclostridium difficile).